The chain runs to 72 residues: Translation initiation factor IF-1 (72 aa).

The S1-like domain maps to 1-72 (MAKDDVIEID…DKGRITYRYK (72 aa)).

The protein belongs to the IF-1 family. As to quaternary structure, component of the 30S ribosomal translation pre-initiation complex which assembles on the 30S ribosome in the order IF-2 and IF-3, IF-1 and N-formylmethionyl-tRNA(fMet); mRNA recruitment can occur at any time during PIC assembly.

Its subcellular location is the cytoplasm. Functionally, one of the essential components for the initiation of protein synthesis. Stabilizes the binding of IF-2 and IF-3 on the 30S subunit to which N-formylmethionyl-tRNA(fMet) subsequently binds. Helps modulate mRNA selection, yielding the 30S pre-initiation complex (PIC). Upon addition of the 50S ribosomal subunit IF-1, IF-2 and IF-3 are released leaving the mature 70S translation initiation complex. This is Translation initiation factor IF-1 from Campylobacter fetus subsp. fetus (strain 82-40).